Consider the following 297-residue polypeptide: uncharacterized protein (297 aa).

This is an uncharacterized protein from Bacillus subtilis (strain 168).